Reading from the N-terminus, the 504-residue chain is Pre-mRNA-processing factor 19 (504 aa).

At serine 2 the chain carries N-acetylserine. The U-box domain maps to 2–73 (SLICSISNEV…KPPSATSIPA (72 aa)). Residues 68-223 (ATSIPAILKA…VGLHSASIPG (156 aa)) are may mediate interaction with PSMC5. Residues lysine 122, lysine 179, lysine 244, and lysine 261 each carry the N6-acetyllysine modification. Residues 219 to 259 (ASIPGILALDLCPSDTNKILTGGADKNVVVFDKSSEQILAT) form a WD 1 repeat. 6 WD repeats span residues 262 to 301 (GHTKKVTSVVFHPSQDLVFSASPDATIRIWSVPNASCVQV), 304 to 345 (AHES…TKVT), 348 to 387 (TSGCSLTCAQFHPDGLIFGTGTMDSQIKIWDLKERTNVAN), 390 to 429 (GHSGPITSIAFSENGYYLATAADDSSVKLWDLRKLKNFKT), 433 to 472 (DNNFEVKSLIFDQSGTYLALGGTDVQIYICKQWTEILHFT), and 473 to 503 (EHSGLTTGVAFGHHAKFIASTGMDRSLKFYS).

It belongs to the WD repeat PRP19 family. As to quaternary structure, homotetramer. Component of activated, catalytic and post-catalytic spliceosomes. Component of the Prp19 complex/PRP19C/Nineteen complex/NTC and related complexes described as PRP19-CDC5L splicing complex and PSO4 complex. A homotetramer of PRPF19, CDC5L, PLRG1 and BCAS2 constitute the core of those complexes. The interaction with CDC5L, PLRG1 and BCAS2 is direct within this core complex. At least three less stably associated proteins CTNNBL1, CWC15 and HSPA8 are found in the Prp19 complex. The Prp19 complex associates with the spliceosome during its assembly and remodeling recruiting additional proteins. Component of the XAB2 complex, a multimeric protein complex composed of XAB2, PRPF19, AQR, ZNF830, ISY1, and PPIE. Interacts with CWC22 and EIF4A3 in an RNA-independent manner. Interacts with RPA1 and RPA2; the PRP19-CDC5L complex is recruited to the sites of DNA repair where it interacts with the replication protein A complex (RPA). Interacts with SETMAR; required for SETMAR recruitment to site of DNA damage. Interacts with U2AF2; the interaction is direct and recruits the Prp19 complex to RNA polymerase II C-terminal domain (CTD) and the pre-mRNA. Interacts with PRPF3. Interacts with APEX1, DNTT and PSMB4. Interacts with PSMC5. Interacts with KNSTRN. Interacts (via N-terminus) with CDC5L. Interacts with KHDC4. Interacts with USB1. Interacts with DDX41. Ubiquitous. Weakly expressed in senescent cells of different tissue origins. Highly expressed in tumor cell lines.

Its subcellular location is the nucleus. It is found in the nucleoplasm. The protein resides in the cytoplasm. It localises to the cytoskeleton. The protein localises to the spindle. Its subcellular location is the lipid droplet. It catalyses the reaction S-ubiquitinyl-[E2 ubiquitin-conjugating enzyme]-L-cysteine + [acceptor protein]-L-lysine = [E2 ubiquitin-conjugating enzyme]-L-cysteine + N(6)-ubiquitinyl-[acceptor protein]-L-lysine.. The protein operates within protein modification; protein ubiquitination. Its function is as follows. Ubiquitin-protein ligase which is a core component of several complexes mainly involved pre-mRNA splicing and DNA repair. Required for pre-mRNA splicing as component of the spliceosome. Core component of the PRP19C/Prp19 complex/NTC/Nineteen complex which is part of the spliceosome and participates in its assembly, its remodeling and is required for its activity. During assembly of the spliceosome, mediates 'Lys-63'-linked polyubiquitination of the U4 spliceosomal protein PRPF3. Ubiquitination of PRPF3 allows its recognition by the U5 component PRPF8 and stabilizes the U4/U5/U6 tri-snRNP spliceosomal complex. Recruited to RNA polymerase II C-terminal domain (CTD) and the pre-mRNA, it may also couple the transcriptional and spliceosomal machineries. The XAB2 complex, which contains PRPF19, is also involved in pre-mRNA splicing, transcription and transcription-coupled repair. Beside its role in pre-mRNA splicing PRPF19, as part of the PRP19-CDC5L complex, plays a role in the DNA damage response/DDR. It is recruited to the sites of DNA damage by the RPA complex where PRPF19 directly ubiquitinates RPA1 and RPA2. 'Lys-63'-linked polyubiquitination of the RPA complex allows the recruitment of the ATR-ATRIP complex and the activation of ATR, a master regulator of the DNA damage response. May also play a role in DNA double-strand break (DSB) repair by recruiting the repair factor SETMAR to altered DNA. As part of the PSO4 complex may also be involved in the DNA interstrand cross-links/ICLs repair process. In addition, may also mediate 'Lys-48'-linked polyubiquitination of substrates and play a role in proteasomal degradation. May play a role in the biogenesis of lipid droplets. May play a role in neural differentiation possibly through its function as part of the spliceosome. This Homo sapiens (Human) protein is Pre-mRNA-processing factor 19.